The following is an 89-amino-acid chain: Large ribosomal subunit protein bL27 (89 aa).

The segment at 1-21 (MAHKKSGGSSRNGRDSNPKYL) is disordered.

Belongs to the bacterial ribosomal protein bL27 family.

In Hyphomonas neptunium (strain ATCC 15444), this protein is Large ribosomal subunit protein bL27.